Consider the following 56-residue polypeptide: Ovomucoid (56 aa).

In terms of domain architecture, Kazal-like spans 6–56 (VDCSEYPKPACTLEHRPLCGSDNKTYGNKCNFCNAVVESNGTLTLSHFGKC). Intrachain disulfides connect Cys-8–Cys-38, Cys-16–Cys-35, and Cys-24–Cys-56. Residue Asn-45 is glycosylated (N-linked (GlcNAc...) asparagine).

It localises to the secreted. This chain is Ovomucoid, found in Pavo cristatus (Indian peafowl).